A 540-amino-acid polypeptide reads, in one-letter code: CTP synthase (540 aa).

Residues 1 to 266 (MAVKYIFVTG…LTPIARHLEL (266 aa)) form an amidoligase domain region. S14 contacts CTP. S14 provides a ligand contact to UTP. Residues 15 to 20 (SLGKGI) and D72 contribute to the ATP site. 2 residues coordinate Mg(2+): D72 and E140. CTP is bound by residues 147–149 (DIE), 187–192 (KTKPTQ), and K223. Residues 187–192 (KTKPTQ) and K223 contribute to the UTP site. A Glutamine amidotransferase type-1 domain is found at 291–540 (TIGFVGKYLS…VKETLAHKKT (250 aa)). G351 is a binding site for L-glutamine. C378 (nucleophile; for glutamine hydrolysis) is an active-site residue. L-glutamine contacts are provided by residues 379–382 (LGMQ), E402, and R470. Active-site residues include H513 and E515.

This sequence belongs to the CTP synthase family. As to quaternary structure, homotetramer.

The catalysed reaction is UTP + L-glutamine + ATP + H2O = CTP + L-glutamate + ADP + phosphate + 2 H(+). The enzyme catalyses L-glutamine + H2O = L-glutamate + NH4(+). It carries out the reaction UTP + NH4(+) + ATP = CTP + ADP + phosphate + 2 H(+). The protein operates within pyrimidine metabolism; CTP biosynthesis via de novo pathway; CTP from UDP: step 2/2. With respect to regulation, allosterically activated by GTP, when glutamine is the substrate; GTP has no effect on the reaction when ammonia is the substrate. The allosteric effector GTP functions by stabilizing the protein conformation that binds the tetrahedral intermediate(s) formed during glutamine hydrolysis. Inhibited by the product CTP, via allosteric rather than competitive inhibition. Catalyzes the ATP-dependent amination of UTP to CTP with either L-glutamine or ammonia as the source of nitrogen. Regulates intracellular CTP levels through interactions with the four ribonucleotide triphosphates. The polypeptide is CTP synthase (Helicobacter hepaticus (strain ATCC 51449 / 3B1)).